The chain runs to 376 residues: MLDLIQTRRDLHQIPEIGLEEFKTQAYLLDVIEKLTTGKDFVQIRTWRTGILVYLQGSQPERTIGWRTDIDGLPIVEQTGLPFASQHQGRMHACGHDFHMTIALGCLERALEEQPKNNLLFLFQPAEENEAGGMLMYEDGAFGDWLPNQFYGLHVRPDLKVGQIATNTHTLFVGTCEVKIRFKGKGGHAAFPHEANDALVAASYFVTQVQSVVSRNVNPIEGAVVTFGVFQAGTTNNVITETAFLHGTIRALTQDMSLLVQKRVKTVAEGVAAAFDMEVEVELKQGGYLPVENNPALARELMDFFDEKDGIELIDIEPAMTGEDFGYLLSKVDGVMFWLGIDSPYALHHPQMSPKEEVLAIGVAAVSSFLKKKAAE.

Residue aspartate 69 is part of the active site. Glutamate 128 (proton acceptor) is an active-site residue.

This sequence belongs to the peptidase M20A family. N-acetyldiaminopimelate deacetylase subfamily.

The enzyme catalyses N-acetyl-(2S,6S)-2,6-diaminopimelate + H2O = (2S,6S)-2,6-diaminopimelate + acetate. The protein operates within amino-acid biosynthesis; L-lysine biosynthesis via DAP pathway; LL-2,6-diaminopimelate from (S)-tetrahydrodipicolinate (acetylase route): step 3/3. Catalyzes the conversion of N-acetyl-diaminopimelate to diaminopimelate and acetate. This Streptococcus pneumoniae (strain P1031) protein is N-acetyldiaminopimelate deacetylase.